We begin with the raw amino-acid sequence, 175 residues long: MEEDDHGGKHDALSALSQWLWSKPLGQHNADLDDDEEVTTGQEELFLPEEQAQARHLFSRKTISREVPADESRSGRVYQTAQHSLMEYSRPTMSIKSRWSFWSSSPKPLPKTPVPSLTSWTHTVNSTPFPQLSTSSGSQSPGKRRLQRLTSMERNGTTLPRTNSGSSTKAMVLHR.

The tract at residues 30 to 47 (ADLDDDEEVTTGQEELFL) is homodimerization. The segment at 50–156 (EQAQARHLFS…QRLTSMERNG (107 aa)) is RNA-binding. 2 disordered regions span residues 58–89 (FSRKTISREVPADESRSGRVYQTAQHSLMEYS) and 103–175 (SSSP…VLHR). Positions 63-74 (ISREVPADESRS) are enriched in basic and acidic residues. Residues serine 64 and serine 133 each carry the phosphoserine modification. 2 stretches are compositionally biased toward polar residues: residues 115-141 (PSLTSWTHTVNSTPFPQLSTSSGSQSP) and 148-169 (RLTSMERNGTTLPRTNSGSSTK).

Belongs to the polerovirus movement protein family. Homodimer. Post-translationally, phosphorylated.

The protein localises to the host cell junction. It is found in the host plasmodesma. Its subcellular location is the host Golgi apparatus. Together with movement protein P3a, facilitates long-distance movement of virions in host. Transports viral genome to neighboring plant cells directly through plasmosdesmata, without any budding. The movement protein allows efficient cell to cell propagation, by bypassing the host cell wall barrier. Binds ssRNA. The polypeptide is Movement protein (Beta vulgaris (Sugar beet)).